Consider the following 566-residue polypeptide: Liver carboxylesterase (566 aa).

The N-terminal stretch at 1-18 (MWLLPLVLTSLASSATWA) is a signal peptide. Residue Asn80 is glycosylated (N-linked (GlcNAc...) asparagine). The cysteines at positions 88 and 117 are disulfide-linked. The Acyl-ester intermediate role is filled by Ser222. Cysteines 274 and 285 form a disulfide. Glu354 acts as the Charge relay system in catalysis. Ser379 bears the Phosphoserine mark. Residue His467 is the Charge relay system of the active site. Positions 563–566 (HAEL) match the Prevents secretion from ER motif.

It belongs to the type-B carboxylesterase/lipase family.

The protein localises to the endoplasmic reticulum lumen. The catalysed reaction is a carboxylic ester + H2O = an alcohol + a carboxylate + H(+). Its activity is regulated as follows. Activated by CHAPS at concentrations of up to 130 mM, higher concentrations reduce activity. In the presence of CHAPS, activity is stimulated by non-ionic detergents. Inhibited by the esterase inhibitors diisopropylfluorophosphate and phenylmethylsulfonyl fluoride. Functionally, involved in the detoxification of xenobiotics and in the activation of ester and amide prodrugs. Active towards triacylglycerides containing short-chain fatty acids from C2 to C6, and 1(3)-monoacylglycerols containing fatty acids from C2 to C12. Inactive on long-chain triacylglycerols and diacylglycerol. Hydrolyzes aromatic and alkyl esters and vitamin A acetate. The hydrolysis rate depends upon the amino acid promoiety and the esterification site of the prodrug. Aromatic promoieties are favored, highest rates are observed with phenylalanyl progdrugs, hydrolysis of valyl and isoleucyl prodrugs is less efficient. With floxuridine prodrugs, activity is higher on 5' monoesters than on 3' monoesters. With gemcitabine prodrugs, activity is higher on 3' monoesters than on 5' monoesters. This chain is Liver carboxylesterase, found in Sus scrofa (Pig).